The primary structure comprises 813 residues: Leucine--tRNA ligase (813 aa).

The short motif at 41-51 (PYPSGTLHMGH) is the 'HIGH' region element. The 'KMSKS' region motif lies at 575–579 (KMSKS). Lys578 provides a ligand contact to ATP.

It belongs to the class-I aminoacyl-tRNA synthetase family.

It is found in the cytoplasm. The catalysed reaction is tRNA(Leu) + L-leucine + ATP = L-leucyl-tRNA(Leu) + AMP + diphosphate. This Francisella philomiragia subsp. philomiragia (strain ATCC 25017 / CCUG 19701 / FSC 153 / O#319-036) protein is Leucine--tRNA ligase.